The chain runs to 537 residues: Chaperonin GroEL (537 aa).

ATP-binding positions include 31 to 34, 87 to 91, G415, and D495; these read TLGP and DGTTT.

It belongs to the chaperonin (HSP60) family. As to quaternary structure, forms a cylinder of 14 subunits composed of two heptameric rings stacked back-to-back. Interacts with the co-chaperonin GroES.

Its subcellular location is the cytoplasm. The catalysed reaction is ATP + H2O + a folded polypeptide = ADP + phosphate + an unfolded polypeptide.. Its function is as follows. Together with its co-chaperonin GroES, plays an essential role in assisting protein folding. The GroEL-GroES system forms a nano-cage that allows encapsulation of the non-native substrate proteins and provides a physical environment optimized to promote and accelerate protein folding. The polypeptide is Chaperonin GroEL (Methanoregula boonei (strain DSM 21154 / JCM 14090 / 6A8)).